A 401-amino-acid polypeptide reads, in one-letter code: Argininosuccinate synthase (401 aa).

9-17 (AYSGGLDTS) is an ATP binding site. Tyr-86 is an L-citrulline binding site. An ATP-binding site is contributed by Gly-116. L-aspartate is bound by residues Thr-118, Asn-122, and Asp-123. Asn-122 is a binding site for L-citrulline. L-citrulline-binding residues include Arg-126, Ser-174, Ser-183, Glu-259, and Tyr-271.

This sequence belongs to the argininosuccinate synthase family. Type 1 subfamily. Homotetramer.

The protein localises to the cytoplasm. It carries out the reaction L-citrulline + L-aspartate + ATP = 2-(N(omega)-L-arginino)succinate + AMP + diphosphate + H(+). It functions in the pathway amino-acid biosynthesis; L-arginine biosynthesis; L-arginine from L-ornithine and carbamoyl phosphate: step 2/3. In Bacillus cytotoxicus (strain DSM 22905 / CIP 110041 / 391-98 / NVH 391-98), this protein is Argininosuccinate synthase.